The sequence spans 407 residues: MKYDNLLDRFIKYVKVNTRSDPDSETTPSTESQEAFALTILKPEMEAIGLQDVHYNPVNGYLIGTLPANNPTLTRKIGFIAHMDTADFNAENVNPQIIDNYQGGDITLGSSNYKLDPKAFPNLNNYIGQTLITTDGTTLLGADDKSGIAEIMTAIEFLTSQPQIEHCDIKVAFGPDEEIGVGADKFEVADFEVDFAYTMDGGPLGELQYETFSAAALEVTFLGRNVHPGTAKDQMINALQLAIDFHEKLPAKERPEYTDGYQGFYHLTGLTGTVEEARASYIIRDFEEASFEARKVKVENIAQSMNAQLGTKRVLVELNDQYYNMKKVIEKDMTAIELAKEVMEELAIKPVIEPIRGGTDGSKISFMGIPTPNIFAGGENMHGRFEFVSLQTMERAVDVIIGLVCKA.

Histidine 82 contributes to the Zn(2+) binding site. Aspartate 84 is a catalytic residue. Zn(2+) is bound at residue aspartate 143. Glutamate 177 serves as the catalytic Proton acceptor. Zn(2+) contacts are provided by glutamate 178, aspartate 200, and histidine 382.

The protein belongs to the peptidase M20B family. Zn(2+) is required as a cofactor.

The protein resides in the cytoplasm. The catalysed reaction is Release of the N-terminal residue from a tripeptide.. Functionally, cleaves the N-terminal amino acid of tripeptides. This is Peptidase T from Streptococcus pyogenes serotype M2 (strain MGAS10270).